Here is a 243-residue protein sequence, read N- to C-terminus: 3-deoxy-manno-octulosonate cytidylyltransferase (243 aa).

The protein belongs to the KdsB family.

Its subcellular location is the cytoplasm. It carries out the reaction 3-deoxy-alpha-D-manno-oct-2-ulosonate + CTP = CMP-3-deoxy-beta-D-manno-octulosonate + diphosphate. It participates in nucleotide-sugar biosynthesis; CMP-3-deoxy-D-manno-octulosonate biosynthesis; CMP-3-deoxy-D-manno-octulosonate from 3-deoxy-D-manno-octulosonate and CTP: step 1/1. The protein operates within bacterial outer membrane biogenesis; lipopolysaccharide biosynthesis. Its function is as follows. Activates KDO (a required 8-carbon sugar) for incorporation into bacterial lipopolysaccharide in Gram-negative bacteria. The sequence is that of 3-deoxy-manno-octulosonate cytidylyltransferase from Helicobacter pylori (strain ATCC 700392 / 26695) (Campylobacter pylori).